Consider the following 93-residue polypeptide: Small ribosomal subunit protein uS19 (93 aa).

The protein belongs to the universal ribosomal protein uS19 family.

Its function is as follows. Protein S19 forms a complex with S13 that binds strongly to the 16S ribosomal RNA. This Nautilia profundicola (strain ATCC BAA-1463 / DSM 18972 / AmH) protein is Small ribosomal subunit protein uS19.